Reading from the N-terminus, the 347-residue chain is Phenylalanine--tRNA ligase alpha subunit (347 aa).

The interval 83–111 (QNLSGGDDSGADPTFDPTLPGTRPSLGHI) is disordered. Glutamate 274 lines the Mg(2+) pocket.

The protein belongs to the class-II aminoacyl-tRNA synthetase family. Phe-tRNA synthetase alpha subunit type 1 subfamily. In terms of assembly, tetramer of two alpha and two beta subunits. Requires Mg(2+) as cofactor.

It localises to the cytoplasm. The catalysed reaction is tRNA(Phe) + L-phenylalanine + ATP = L-phenylalanyl-tRNA(Phe) + AMP + diphosphate + H(+). The sequence is that of Phenylalanine--tRNA ligase alpha subunit from Rhodopirellula baltica (strain DSM 10527 / NCIMB 13988 / SH1).